The following is a 224-amino-acid chain: uncharacterized protein (224 aa).

The HTH gntR-type domain occupies 10 to 77 (TPYYLQFYNQ…DRNGFSITSL (68 aa)). Positions 37–56 (ETQLAKSFGVSRSPIREAMR) form a DNA-binding region, H-T-H motif.

This is an uncharacterized protein from Bacillus subtilis (strain 168).